Reading from the N-terminus, the 339-residue chain is N-acetylmuramate/N-acetylglucosamine kinase (339 aa).

This sequence belongs to the kinase AmgK family.

The enzyme catalyses N-acetyl-D-muramate + ATP = N-acetyl-alpha-D-muramate 1-phosphate + ADP + H(+). It carries out the reaction N-acetyl-D-glucosamine + ATP = N-acetyl-alpha-D-glucosamine 1-phosphate + ADP + H(+). The protein operates within cell wall biogenesis; peptidoglycan recycling. Sugar kinase that catalyzes the ATP-dependent phosphorylation of N-acetylmuramate (MurNAc) and N-acetylglucosamine (GlcNAc) at its C1 hydroxyl group, leading to MurNAc alpha-1P and GlcNAc alpha-1P, respectively. Is involved in peptidoglycan recycling as part of a cell wall recycling pathway that bypasses de novo biosynthesis of the peptidoglycan precursor UDP-MurNAc. Plays a role in intrinsic resistance to fosfomycin, which targets the de novo synthesis of UDP-MurNAc. Is also able to use N-acetylgalactosamine (GalNAc) as a substrate, but not N-acetylmannosamine, N-deacetylated sugars or glucose. The chain is N-acetylmuramate/N-acetylglucosamine kinase from Pseudomonas putida (strain ATCC 47054 / DSM 6125 / CFBP 8728 / NCIMB 11950 / KT2440).